The sequence spans 122 residues: Large ribosomal subunit protein uL14 (122 aa).

Belongs to the universal ribosomal protein uL14 family. Part of the 50S ribosomal subunit. Forms a cluster with proteins L3 and L19. In the 70S ribosome, L14 and L19 interact and together make contacts with the 16S rRNA in bridges B5 and B8.

Its function is as follows. Binds to 23S rRNA. Forms part of two intersubunit bridges in the 70S ribosome. The polypeptide is Large ribosomal subunit protein uL14 (Nitrobacter winogradskyi (strain ATCC 25391 / DSM 10237 / CIP 104748 / NCIMB 11846 / Nb-255)).